A 247-amino-acid chain; its full sequence is Cell division protein ZapD (247 aa).

Belongs to the ZapD family. In terms of assembly, interacts with FtsZ.

The protein resides in the cytoplasm. Functionally, cell division factor that enhances FtsZ-ring assembly. Directly interacts with FtsZ and promotes bundling of FtsZ protofilaments, with a reduction in FtsZ GTPase activity. The sequence is that of Cell division protein ZapD from Cronobacter sakazakii (strain ATCC BAA-894) (Enterobacter sakazakii).